We begin with the raw amino-acid sequence, 268 residues long: Short chain dehydrogenase/reductase dpchG (268 aa).

6 residues coordinate NADP(+): valine 18, aspartate 70, asparagine 97, lysine 131, tyrosine 165, and lysine 169. Catalysis depends on tyrosine 165, which acts as the Proton acceptor. The active-site Lowers pKa of active site Tyr is lysine 169.

This sequence belongs to the short-chain dehydrogenases/reductases (SDR) family.

It participates in secondary metabolite biosynthesis; terpenoid biosynthesis. Short chain dehydrogenase/reductase; part of the gene cluster that mediates the biosynthesis of the diterpenoid pyrones higginsianins A and B. The first step of the pathway is the synthesis of the alpha-pyrone moiety by the polyketide synthase dpchA via condensation of one acetyl-CoA starter unit with 3 malonyl-CoA units and 2 methylations. The alpha-pyrone is then combined with geranylgeranyl pyrophosphate (GGPP) formed by the GGPP synthase dpchD through the action of the prenyltransferase dpchC to yield a linear alpha-pyrone diterpenoid. Subsequent steps in the diterpenoid pyrone biosynthetic pathway involve the decalin core formation, which is initiated by the epoxidation of the C10-C11 olefin by the FAD-dependent oxidoreductase dpchE, and is followed by a cyclization cascade catalyzed by the terpene cyclase dpchB. The short chain dehydrogenase/reductase dpchG then oxidizes the 8S hydroxy group to a ketone and the short chain dehydrogenase/reductase dpchH reduces the ketone to the 8R hydroxy group to yield higginsianin B. Finally, the FAD-dependent oxidoreductase dpchF converts higginsianin B into higginsianin A. The sequence is that of Short chain dehydrogenase/reductase dpchG from Colletotrichum higginsianum (strain IMI 349063) (Crucifer anthracnose fungus).